Consider the following 387-residue polypeptide: S-adenosylmethionine synthase (387 aa).

ATP is bound at residue His-15. Asp-17 lines the Mg(2+) pocket. Glu-43 contributes to the K(+) binding site. Positions 56 and 99 each coordinate L-methionine. A flexible loop region spans residues 99-109; that stretch reads QSPDIAQGVNA. Residues 166–168, 232–233, Asp-241, 247–248, Ala-264, and Lys-268 each bind ATP; these read DAK, RF, and RK. Asp-241 contacts L-methionine. Lys-272 contacts L-methionine.

It belongs to the AdoMet synthase family. Homotetramer; dimer of dimers. The cofactor is Mg(2+). It depends on K(+) as a cofactor.

It localises to the cytoplasm. It carries out the reaction L-methionine + ATP + H2O = S-adenosyl-L-methionine + phosphate + diphosphate. It participates in amino-acid biosynthesis; S-adenosyl-L-methionine biosynthesis; S-adenosyl-L-methionine from L-methionine: step 1/1. Functionally, catalyzes the formation of S-adenosylmethionine (AdoMet) from methionine and ATP. The overall synthetic reaction is composed of two sequential steps, AdoMet formation and the subsequent tripolyphosphate hydrolysis which occurs prior to release of AdoMet from the enzyme. The protein is S-adenosylmethionine synthase of Dechloromonas aromatica (strain RCB).